Reading from the N-terminus, the 91-residue chain is Lipolysis-activating peptide 1-alpha chain (91 aa).

Positions 1–22 (MMKLVLFGIIVILFSLIGSIHG) are cleaved as a signal peptide. One can recognise an LCN-type CS-alpha/beta domain in the interval 24–87 (SGNYPLNPYG…VWNAVKKHCK (64 aa)). Intrachain disulfides connect cysteine 38-cysteine 61, cysteine 47-cysteine 66, and cysteine 51-cysteine 68.

It belongs to the long (3 C-C) scorpion toxin superfamily. Monomer (edited version) and heterodimer (non-edited version) of this alpha chain and a beta chain (AC P84809). Expressed by the venom gland.

It localises to the secreted. Functionally, the heterodimer non-edited LVP1 induces lipolysis in rat adipocytes. Induction of lipolysis by LVP1 appears to be mediated through the beta-2 adrenergic receptor pathway (ADRB2). Intracerebroventricular injection is not toxic to mice. In terms of biological role, the edited BmKBTx-like, similar to beta-toxins, may modulate voltage-gated sodium channels (Nav) and may block voltage-gated potassium channels (Kv). This chain is Lipolysis-activating peptide 1-alpha chain, found in Buthus occitanus tunetanus (Common European scorpion).